The sequence spans 423 residues: CinA-like protein (423 aa).

It belongs to the CinA family.

In Chlorobaculum tepidum (strain ATCC 49652 / DSM 12025 / NBRC 103806 / TLS) (Chlorobium tepidum), this protein is CinA-like protein.